A 687-amino-acid polypeptide reads, in one-letter code: Chloride channel protein ClC-Ka (687 aa).

A run of 4 helical transmembrane segments spans residues 52–72, 161–181, 202–222, and 236–256; these read FLMT…FALG, LFLG…AYLG, VAGA…GVLF, and YWRG…LAVF. Ca(2+) contacts are provided by Glu259, Glu261, Asp278, and Glu281. 6 consecutive transmembrane segments (helical) span residues 282 to 302, 325 to 345, 396 to 416, 417 to 437, 452 to 472, and 486 to 506; these read IFFF…YLYC, PLYA…PGVG, FTIF…LILA, TTIP…AAIG, IVAG…AGAA, and LLAF…MAVL. The Cytoplasmic segment spans residues 507–687; it reads AANAIAQSCQ…SALTNPPPAK (181 aa). 2 CBS domains span residues 551 to 612 and 628 to 686; these read MRRA…ARAS and TEPV…PPPA.

It belongs to the chloride channel (TC 2.A.49) family. CLCNKA subfamily. As to quaternary structure, homodimer. Interacts with BSND. As to expression, expressed predominantly in the kidney.

The protein resides in the basolateral cell membrane. It catalyses the reaction chloride(in) = chloride(out). The catalysed reaction is bromide(in) = bromide(out). The enzyme catalyses nitrate(in) = nitrate(out). It carries out the reaction iodide(out) = iodide(in). Anion-selective channel permeable to small monovalent anions with ion selectivity for chloride &gt; bromide &gt; nitrate &gt; iodide. Forms a homodimeric channel where each subunit has its own ion conduction pathway. May conduct double-barreled currents controlled by two types of gates, two fast gates that control each subunit independently and a slow common gate that opens and shuts off both subunits simultaneously. Assembles with the regulatory subunit BSND/Barttin for sorting at the basolateral plasma membrane domain and functional switch to the ion conducting state. CLCNKA:BSND channels display mostly a linear current-voltage relationship with fast gating at negative potentials. Mediates transepithelial chloride transport from the lumen to interstitial compartment along the thin ascending limb of Henle's loop, contributing to generation of hypertonic medullary interstitium as a countercurrent system to achieve urine concentration. Conducts chloride currents in the stria vascularis of the inner ear to establish the endocochlear potential necessary for normal hearing. This is Chloride channel protein ClC-Ka (CLCNKA) from Oryctolagus cuniculus (Rabbit).